Reading from the N-terminus, the 389-residue chain is Migration and invasion-inhibitory protein (389 aa).

The segment covering Leu-44–Glu-54 has biased composition (low complexity). Disordered regions lie at residues Leu-44 to Leu-80 and Lys-131 to Pro-150. Positions Ser-58–Ser-70 are enriched in polar residues. The span at Gln-71–Leu-80 shows a compositional bias: basic and acidic residues. The residue at position 309 (Ser-309) is a Phosphoserine.

Interacts with IGFBP2.

Its function is as follows. Inhibits glioma cells invasion and down-regulates adhesion- and motility-associated genes such as NFKB2 and ICAM1. Exhibits opposing effects to IGFBP2 on cell invasion. This is Migration and invasion-inhibitory protein (Miip) from Rattus norvegicus (Rat).